The following is a 544-amino-acid chain: Chaperonin GroEL (544 aa).

Residues 30–33 (TLGP), K51, 87–91 (DGTTT), G415, 479–481 (NAA), and D495 each bind ATP.

It belongs to the chaperonin (HSP60) family. As to quaternary structure, forms a cylinder of 14 subunits composed of two heptameric rings stacked back-to-back. Interacts with the co-chaperonin GroES.

Its subcellular location is the cytoplasm. It carries out the reaction ATP + H2O + a folded polypeptide = ADP + phosphate + an unfolded polypeptide.. In terms of biological role, together with its co-chaperonin GroES, plays an essential role in assisting protein folding. The GroEL-GroES system forms a nano-cage that allows encapsulation of the non-native substrate proteins and provides a physical environment optimized to promote and accelerate protein folding. The polypeptide is Chaperonin GroEL (Francisella tularensis subsp. tularensis (strain SCHU S4 / Schu 4)).